The sequence spans 336 residues: Nicotinate-nucleotide--dimethylbenzimidazole phosphoribosyltransferase (336 aa).

Glu304 serves as the catalytic Proton acceptor.

It belongs to the CobT family.

The enzyme catalyses 5,6-dimethylbenzimidazole + nicotinate beta-D-ribonucleotide = alpha-ribazole 5'-phosphate + nicotinate + H(+). Its pathway is nucleoside biosynthesis; alpha-ribazole biosynthesis; alpha-ribazole from 5,6-dimethylbenzimidazole: step 1/2. Functionally, catalyzes the synthesis of alpha-ribazole-5'-phosphate from nicotinate mononucleotide (NAMN) and 5,6-dimethylbenzimidazole (DMB). The polypeptide is Nicotinate-nucleotide--dimethylbenzimidazole phosphoribosyltransferase (Ruegeria sp. (strain TM1040) (Silicibacter sp.)).